The sequence spans 262 residues: Phosphatidylglycerol--prolipoprotein diacylglyceryl transferase 1 (262 aa).

The next 4 membrane-spanning stretches (helical) occupy residues 15–35 (WYGI…SINA), 40–60 (LNFD…IIGA), 83–103 (QGGL…FIYC), and 108–128 (VDFL…QGIG). R129 serves as a coordination point for a 1,2-diacyl-sn-glycero-3-phospho-(1'-sn-glycerol). 3 helical membrane passes run 169-189 (TFLY…IILY), 197-217 (GVVI…IEGL), and 229-249 (VAQL…IIIV).

It belongs to the Lgt family.

It localises to the cell membrane. The enzyme catalyses L-cysteinyl-[prolipoprotein] + a 1,2-diacyl-sn-glycero-3-phospho-(1'-sn-glycerol) = an S-1,2-diacyl-sn-glyceryl-L-cysteinyl-[prolipoprotein] + sn-glycerol 1-phosphate + H(+). It functions in the pathway protein modification; lipoprotein biosynthesis (diacylglyceryl transfer). Catalyzes the transfer of the diacylglyceryl group from phosphatidylglycerol to the sulfhydryl group of the N-terminal cysteine of a prolipoprotein, the first step in the formation of mature lipoproteins. The chain is Phosphatidylglycerol--prolipoprotein diacylglyceryl transferase 1 from Clostridium perfringens (strain 13 / Type A).